The chain runs to 353 residues: Phosphate acyltransferase (353 aa).

The protein belongs to the PlsX family. As to quaternary structure, homodimer. Probably interacts with PlsY.

It localises to the cytoplasm. The enzyme catalyses a fatty acyl-[ACP] + phosphate = an acyl phosphate + holo-[ACP]. It functions in the pathway lipid metabolism; phospholipid metabolism. In terms of biological role, catalyzes the reversible formation of acyl-phosphate (acyl-PO(4)) from acyl-[acyl-carrier-protein] (acyl-ACP). This enzyme utilizes acyl-ACP as fatty acyl donor, but not acyl-CoA. The protein is Phosphate acyltransferase of Rhodopseudomonas palustris (strain ATCC BAA-98 / CGA009).